The following is a 323-amino-acid chain: Formyl peptide receptor-related sequence 4 (323 aa).

The Extracellular portion of the chain corresponds to 1 to 29; sequence MEVNISMPLNGSEVVFYDSTTSRVLWILS. 2 N-linked (GlcNAc...) asparagine glycosylation sites follow: Asn-4 and Asn-10. Residues 30–50 form a helical membrane-spanning segment; sequence LVVLFITFVLGVLGNGLVIWV. The Cytoplasmic segment spans residues 51-66; that stretch reads AGFQMAHTVTTVSYLN. The helical transmembrane segment at 67–87 threads the bilayer; sequence LALSDLSFMATLPLHIISMVM. The Extracellular portion of the chain corresponds to 88 to 99; that stretch reads RGKWLFGWFLCK. The cysteines at positions 98 and 176 are disulfide-linked. Residues 100–120 form a helical membrane-spanning segment; that stretch reads LVHIIANINLFVSIFLITLIA. The Cytoplasmic segment spans residues 121-144; sequence MDRCICVLCPVWSQNHRTVSLARK. Residues 145–165 form a helical membrane-spanning segment; it reads VVLGAWIFALLLTLPHFLFLT. At 166–202 the chain is on the extracellular side; sequence TVRDARGDVYCISKFESWVATSEEQLKVSVIAATASG. Residues 203-223 traverse the membrane as a helical segment; that stretch reads IINFIIGFSMPMSFIAICYGL. At 224–241 the chain is on the cytoplasmic side; sequence MAAKICRRGFVNSSRPLR. The helical transmembrane segment at 242 to 262 threads the bilayer; that stretch reads VLTAVAVSFFVCWFPFQLIML. The Extracellular portion of the chain corresponds to 263–280; it reads LGNIFNNETLSIIHMLVN. A glycan (N-linked (GlcNAc...) asparagine) is linked at Asn-269. Residues 281-301 form a helical membrane-spanning segment; sequence PANTLASFNSCLNPILYVFLG. Topologically, residues 302-323 are cytoplasmic; the sequence is QEFRDRLIYSLYASLERALRED.

The protein belongs to the G-protein coupled receptor 1 family. In terms of tissue distribution, expressed in 0.6 % of a subset of sensory neurons located in the apical layer of the vomeronasal organ. Each neuron appears to express only one receptor gene.

The protein localises to the cell membrane. In terms of biological role, may have an olfactory function associated with the identification of pathogens or of pathogenic states. The sequence is that of Formyl peptide receptor-related sequence 4 (Fpr-rs4) from Mus musculus (Mouse).